Reading from the N-terminus, the 213-residue chain is Putative 3-methyladenine DNA glycosylase (213 aa).

Belongs to the DNA glycosylase MPG family.

In Leifsonia xyli subsp. xyli (strain CTCB07), this protein is Putative 3-methyladenine DNA glycosylase.